We begin with the raw amino-acid sequence, 174 residues long: MGIEEKAGNLGIVTTTLETVVNWGRTNAMWPLLFGLACCAIEMMGAQASNYDLSRFGMELNRASPRQADLMIVAGRVSRKMAPVVRRLYDQMPEPKWVIAMGDCAACGGIFNNYAIVQGVDEVVPVDVYVAGCPPRPEALIDGIMMLHQKVMREKISGKKESPIRIDQPLVQVK.

[4Fe-4S] cluster contacts are provided by cysteine 38, cysteine 39, cysteine 104, and cysteine 133.

It belongs to the complex I 20 kDa subunit family. In terms of assembly, NDH-1 is composed of 14 different subunits. Subunits NuoB, C, D, E, F, and G constitute the peripheral sector of the complex. [4Fe-4S] cluster serves as cofactor.

The protein resides in the cell membrane. The catalysed reaction is a quinone + NADH + 5 H(+)(in) = a quinol + NAD(+) + 4 H(+)(out). Its function is as follows. NDH-1 shuttles electrons from NADH, via FMN and iron-sulfur (Fe-S) centers, to quinones in the respiratory chain. The immediate electron acceptor for the enzyme in this species is believed to be ubiquinone. Couples the redox reaction to proton translocation (for every two electrons transferred, four hydrogen ions are translocated across the cytoplasmic membrane), and thus conserves the redox energy in a proton gradient. The polypeptide is NADH-quinone oxidoreductase subunit B 2 (Chloroflexus aurantiacus (strain ATCC 29366 / DSM 635 / J-10-fl)).